Here is a 141-residue protein sequence, read N- to C-terminus: MKENDVVLRTVTKLVVFILLTFGFYVFFAGHNNPGGGFIGGLIFSSAFILMFLAFNVEEVLESLPIDFRILMIIGALVSSITAIMPTFFGKPFLSQYETTLTLPILGHIHVTTITLFELGILFSVVGVIVTVMLSLSGGRS.

4 consecutive transmembrane segments (helical) span residues 10–30 (TVTKLVVFILLTFGFYVFFAG), 35–55 (GGGFIGGLIFSSAFILMFLAF), 70–90 (ILMIIGALVSSITAIMPTFFG), and 114–134 (ITLFELGILFSVVGVIVTVML).

It belongs to the CPA3 antiporters (TC 2.A.63) subunit B family. May form a heterooligomeric complex that consists of seven subunits: mnhA2, mnhB2, mnhC2, mnhD2, mnhE2, mnhF2 and mnhG2.

Its subcellular location is the cell membrane. The sequence is that of Putative antiporter subunit mnhB2 (mnhB2) from Staphylococcus aureus (strain MRSA252).